The chain runs to 692 residues: Protein arginine N-methyltransferase 7 (692 aa).

2 SAM-dependent MTase PRMT-type domains span residues Ser-14–Trp-345 and Ser-358–Glu-684. The residue at position 32 (Arg-32) is an Omega-N-methylarginine. Catalysis depends on residues Glu-144 and Glu-153.

Belongs to the class I-like SAM-binding methyltransferase superfamily. Protein arginine N-methyltransferase family. PRMT7 subfamily. Homodimer and heterodimer. Interacts with PRMT5 and SNRPD3. Interacts with CTCFL.

The protein resides in the cytoplasm. It localises to the cytosol. Its subcellular location is the nucleus. It catalyses the reaction L-arginyl-[protein] + S-adenosyl-L-methionine = N(omega)-methyl-L-arginyl-[protein] + S-adenosyl-L-homocysteine + H(+). Arginine methyltransferase that can both catalyze the formation of omega-N monomethylarginine (MMA) and symmetrical dimethylarginine (sDMA), with a preference for the formation of MMA. Specifically mediates the symmetrical dimethylation of arginine residues in the small nuclear ribonucleoproteins Sm D1 (SNRPD1) and Sm D3 (SNRPD3); such methylation being required for the assembly and biogenesis of snRNP core particles. Specifically mediates the symmetric dimethylation of histone H4 'Arg-3' to form H4R3me2s. Plays a role in gene imprinting by being recruited by CTCFL at the H19 imprinted control region (ICR) and methylating histone H4 to form H4R3me2s, possibly leading to recruit DNA methyltransferases at these sites. May also play a role in embryonic stem cell (ESC) pluripotency. Also able to mediate the arginine methylation of histone H2A and myelin basic protein (MBP) in vitro; the relevance of such results is however unclear in vivo. This chain is Protein arginine N-methyltransferase 7 (Prmt7), found in Mus musculus (Mouse).